Reading from the N-terminus, the 381-residue chain is Succinyl-diaminopimelate desuccinylase 1 (381 aa).

Residue His-70 coordinates Zn(2+). The active site involves Asp-72. Asp-103 serves as a coordination point for Zn(2+). Glu-136 (proton acceptor) is an active-site residue. 3 residues coordinate Zn(2+): Glu-137, Glu-165, and His-354.

The protein belongs to the peptidase M20A family. DapE subfamily. Homodimer. The cofactor is Zn(2+). Co(2+) serves as cofactor.

The enzyme catalyses N-succinyl-(2S,6S)-2,6-diaminopimelate + H2O = (2S,6S)-2,6-diaminopimelate + succinate. The protein operates within amino-acid biosynthesis; L-lysine biosynthesis via DAP pathway; LL-2,6-diaminopimelate from (S)-tetrahydrodipicolinate (succinylase route): step 3/3. Its function is as follows. Catalyzes the hydrolysis of N-succinyl-L,L-diaminopimelic acid (SDAP), forming succinate and LL-2,6-diaminopimelate (DAP), an intermediate involved in the bacterial biosynthesis of lysine and meso-diaminopimelic acid, an essential component of bacterial cell walls. This is Succinyl-diaminopimelate desuccinylase 1 from Ruegeria sp. (strain TM1040) (Silicibacter sp.).